A 200-amino-acid chain; its full sequence is NAD(P)H dehydrogenase (quinone) (200 aa).

One can recognise a Flavodoxin-like domain in the interval 4 to 191; that stretch reads VLVLYYSSYG…DIARYQGKRV (188 aa). FMN-binding positions include 10–15 and 79–81; these read SSYGHV and TRF. Position 12 (Y12) interacts with NAD(+). A substrate-binding site is contributed by W99. FMN is bound by residues 114–120 and H135; that span reads STGTQHG.

This sequence belongs to the WrbA family. FMN is required as a cofactor.

The enzyme catalyses a quinone + NADH + H(+) = a quinol + NAD(+). The catalysed reaction is a quinone + NADPH + H(+) = a quinol + NADP(+). In Burkholderia lata (strain ATCC 17760 / DSM 23089 / LMG 22485 / NCIMB 9086 / R18194 / 383), this protein is NAD(P)H dehydrogenase (quinone).